A 466-amino-acid chain; its full sequence is 3-isopropylmalate dehydratase large subunit (466 aa).

3 residues coordinate [4Fe-4S] cluster: C347, C407, and C410.

Belongs to the aconitase/IPM isomerase family. LeuC type 1 subfamily. Heterodimer of LeuC and LeuD. [4Fe-4S] cluster is required as a cofactor.

It catalyses the reaction (2R,3S)-3-isopropylmalate = (2S)-2-isopropylmalate. The protein operates within amino-acid biosynthesis; L-leucine biosynthesis; L-leucine from 3-methyl-2-oxobutanoate: step 2/4. Functionally, catalyzes the isomerization between 2-isopropylmalate and 3-isopropylmalate, via the formation of 2-isopropylmaleate. In Escherichia coli O9:H4 (strain HS), this protein is 3-isopropylmalate dehydratase large subunit.